The following is a 217-amino-acid chain: MAAAAASAVNAVNDCFSIGSTVVCTTCFNEEVEGEVLAFDHNTKMLILKCRSKSTEELSDIYAMNLSLCSNVQVIKECNGNFDDPQKLNLEQVKMRLRKTVERRQDYLKSKNADVSPEAQELYRAIAKQYGYNEVSWQGLNIQILNEVTISPPYRVDNVVSSSNNETSCNYIKRIIKQFFNTRPSPVPESGAAASTSSPSVSPTSSSLASGSPVPAN.

The Sm domain maps to 9–78; that stretch reads VNAVNDCFSI…CSNVQVIKEC (70 aa). The AD domain occupies 86–184; the sequence is QKLNLEQVKM…IIKQFFNTRP (99 aa). The tract at residues 185–217 is disordered; sequence SPVPESGAAASTSSPSVSPTSSSLASGSPVPAN. Residues 190–217 are compositionally biased toward low complexity; it reads SGAAASTSSPSVSPTSSSLASGSPVPAN.

This sequence belongs to the LSM12 family. Component of the Atx2-tyf activator complex, composed of Atx2, tyf, pAbp, Lsm12a. Interacts with tyf, Atx2 and pAbp.

Its function is as follows. Component of the Atx2-tyf activator complex which functions in the circadian pacemaker neurons to activate the TYF-dependent translation of per and maintain 24 hour periodicity in circadian behaviors. Within the Atx2-tyf complex, likely to function as a molecular adapter which stabilizes the interaction between Atx2 and the translational regulator tyf. The protein is LSM12 homolog A of Drosophila melanogaster (Fruit fly).